The chain runs to 604 residues: ATP-dependent RNA helicase DBP1 (604 aa).

The interval Met1 to Gly79 is disordered. Over residues Ser32–Arg45 the composition is skewed to polar residues. The short motif at Thr138 to Lys166 is the Q motif element. A Helicase ATP-binding domain is found at Ile169–Leu358. Ala182–Thr189 contacts ATP. The DEAD box motif lies at Asp302–Asp305. In terms of domain architecture, Helicase C-terminal spans Leu386–Val529. A disordered region spans residues Phe535–Ser591. The segment covering Asn541–Ser552 has biased composition (low complexity). Over residues Asn553–Trp565 the composition is skewed to basic and acidic residues.

Belongs to the DEAD box helicase family. DDX3/DED1 subfamily.

The protein resides in the cytoplasm. The enzyme catalyses ATP + H2O = ADP + phosphate + H(+). ATP-binding RNA helicase involved in translation initiation. Remodels RNA in response to ADP and ATP concentrations by facilitating disruption, but also formation of RNA duplexes. Redundant to DED1, may be required in conditions in which DED1 expression is decreased. This Candida glabrata (strain ATCC 2001 / BCRC 20586 / JCM 3761 / NBRC 0622 / NRRL Y-65 / CBS 138) (Yeast) protein is ATP-dependent RNA helicase DBP1 (DBP1).